The sequence spans 269 residues: 3-deoxy-manno-octulosonate cytidylyltransferase (269 aa).

The protein belongs to the KdsB family.

It is found in the cytoplasm. The catalysed reaction is 3-deoxy-alpha-D-manno-oct-2-ulosonate + CTP = CMP-3-deoxy-beta-D-manno-octulosonate + diphosphate. Its pathway is nucleotide-sugar biosynthesis; CMP-3-deoxy-D-manno-octulosonate biosynthesis; CMP-3-deoxy-D-manno-octulosonate from 3-deoxy-D-manno-octulosonate and CTP: step 1/1. It functions in the pathway bacterial outer membrane biogenesis; lipopolysaccharide biosynthesis. Its function is as follows. Activates KDO (a required 8-carbon sugar) for incorporation into bacterial lipopolysaccharide in Gram-negative bacteria. The sequence is that of 3-deoxy-manno-octulosonate cytidylyltransferase from Cupriavidus taiwanensis (strain DSM 17343 / BCRC 17206 / CCUG 44338 / CIP 107171 / LMG 19424 / R1) (Ralstonia taiwanensis (strain LMG 19424)).